The following is a 424-amino-acid chain: Zona pellucida sperm-binding protein 3 (424 aa).

Positions 1 to 22 (MELSYRLFICLLLWGSTELCYP) are cleaved as a signal peptide. Position 23 is a pyrrolidone carboxylic acid (Q23). Residues 23-387 (QPFWLLQGGA…QWALPADTSV (365 aa)) lie on the Extracellular side of the membrane. In terms of domain architecture, ZP spans 45–307 (ECREATLLVT…KACSFSKSSN (263 aa)). Disulfide bonds link C46–C140 and C78–C99. 2 N-linked (GlcNAc...) asparagine glycosylation sites follow: N125 and N147. O-linked (GalNAc...) threonine glycans are attached at residues T156, T162, and T163. Intrachain disulfides connect C217/C282 and C239/C300. N-linked (GlcNAc...) asparagine glycosylation occurs at N272. Residues 351–424 (RRHVTEEADI…TASRPVSASE (74 aa)) constitute a propeptide, removed in mature form. Residues 388–408 (LLLGIGLAVVASLTLTAVILI) form a helical membrane-spanning segment. Residues 409 to 424 (FTRRWRTASRPVSASE) lie on the Cytoplasmic side of the membrane.

The protein belongs to the ZP domain family. ZPC subfamily. As to quaternary structure, polymers of ZP2 and ZP3 organized into long filaments cross-linked by ZP1 homodimers. Interacts with ZP1 and ZP2. Post-translationally, proteolytically cleaved before the transmembrane segment to yield the secreted ectodomain incorporated in the zona pellucida. In terms of processing, N-glycosylated. O-glycosylated; removal of O-linked glycans may play an important role in the post-fertilization block to polyspermy. In terms of tissue distribution, expressed in oocytes.

It localises to the zona pellucida. The protein resides in the cell membrane. Its function is as follows. Component of the zona pellucida, an extracellular matrix surrounding oocytes which mediates sperm binding, induction of the acrosome reaction and prevents post-fertilization polyspermy. The zona pellucida is composed of 3 to 4 glycoproteins, ZP1, ZP2, ZP3, and ZP4. ZP3 is essential for sperm binding and zona matrix formation. The chain is Zona pellucida sperm-binding protein 3 (ZP3) from Macaca radiata (Bonnet macaque).